Here is a 964-residue protein sequence, read N- to C-terminus: Integrator complex subunit 7 (964 aa).

The span at 937-958 (QQLRHQLQQQQQNVPQPAAQRN) shows a compositional bias: low complexity. The segment at 937 to 964 (QQLRHQLQQQQQNVPQPAAQRNISTRFQ) is disordered.

The protein belongs to the Integrator subunit 7 family. As to quaternary structure, component of the Integrator complex, composed of core subunits INTS1, INTS2, INTS3, INTS4, INTS5, INTS6, INTS7, INTS8, INTS9/RC74, INTS10, INTS11/CPSF3L, INTS12, INTS13, INTS14 and INTS15. The core complex associates with protein phosphatase 2A subunits PPP2CA and PPP2R1A, to form the Integrator-PP2A (INTAC) complex.

It is found in the nucleus. Its subcellular location is the chromosome. The protein localises to the cytoplasm. In terms of biological role, component of the integrator complex, a multiprotein complex that terminates RNA polymerase II (Pol II) transcription in the promoter-proximal region of genes. The integrator complex provides a quality checkpoint during transcription elongation by driving premature transcription termination of transcripts that are unfavorably configured for transcriptional elongation: the complex terminates transcription by (1) catalyzing dephosphorylation of the C-terminal domain (CTD) of Pol II subunit POLR2A/RPB1 and SUPT5H/SPT5, (2) degrading the exiting nascent RNA transcript via endonuclease activity and (3) promoting the release of Pol II from bound DNA. The integrator complex is also involved in terminating the synthesis of non-coding Pol II transcripts, such as enhancer RNAs (eRNAs), small nuclear RNAs (snRNAs), telomerase RNAs and long non-coding RNAs (lncRNAs). Essential during embryogenesis for eye development. This Danio rerio (Zebrafish) protein is Integrator complex subunit 7 (ints7).